A 254-amino-acid chain; its full sequence is Pimeloyl-[acyl-carrier protein] methyl ester esterase (254 aa).

In terms of domain architecture, AB hydrolase-1 spans 14-238; that stretch reads VVMLHGWGLH…QASHAPFLSH (225 aa). Residues tryptophan 20, 80 to 81, and 142 to 146 each bind substrate; these read SL and FLALQ. Serine 80 acts as the Nucleophile in catalysis. Catalysis depends on residues aspartate 204 and histidine 232. Histidine 232 contributes to the substrate binding site.

The protein belongs to the AB hydrolase superfamily. Carboxylesterase BioH family. As to quaternary structure, monomer.

Its subcellular location is the cytoplasm. It catalyses the reaction 6-carboxyhexanoyl-[ACP] methyl ester + H2O = 6-carboxyhexanoyl-[ACP] + methanol + H(+). Its pathway is cofactor biosynthesis; biotin biosynthesis. Functionally, the physiological role of BioH is to remove the methyl group introduced by BioC when the pimeloyl moiety is complete. It allows to synthesize pimeloyl-ACP via the fatty acid synthetic pathway through the hydrolysis of the ester bonds of pimeloyl-ACP esters. This chain is Pimeloyl-[acyl-carrier protein] methyl ester esterase, found in Chromobacterium violaceum (strain ATCC 12472 / DSM 30191 / JCM 1249 / CCUG 213 / NBRC 12614 / NCIMB 9131 / NCTC 9757 / MK).